We begin with the raw amino-acid sequence, 154 residues long: NADPH-dependent 7-cyano-7-deazaguanine reductase (154 aa).

The span at 1–11 (MAKKPVKDLKQ) shows a compositional bias: basic and acidic residues. The disordered stretch occupies residues 1–31 (MAKKPVKDLKQLGHATPVPASPEEATLERVP). Cysteine 52 functions as the Thioimide intermediate in the catalytic mechanism. Residue aspartate 59 is the Proton donor of the active site. Substrate-binding positions include 74 to 76 (IES) and 93 to 94 (HE).

Belongs to the GTP cyclohydrolase I family. QueF type 1 subfamily.

The protein localises to the cytoplasm. It catalyses the reaction 7-aminomethyl-7-carbaguanine + 2 NADP(+) = 7-cyano-7-deazaguanine + 2 NADPH + 3 H(+). It functions in the pathway tRNA modification; tRNA-queuosine biosynthesis. Catalyzes the NADPH-dependent reduction of 7-cyano-7-deazaguanine (preQ0) to 7-aminomethyl-7-deazaguanine (preQ1). The sequence is that of NADPH-dependent 7-cyano-7-deazaguanine reductase from Parvibaculum lavamentivorans (strain DS-1 / DSM 13023 / NCIMB 13966).